The sequence spans 513 residues: Cytochrome P450 monooxygenase asaD (513 aa).

The helical transmembrane segment at 14 to 34 threads the bilayer; sequence ILYPFLFGIFAVASLCIATLL. N258, N370, N431, and N441 each carry an N-linked (GlcNAc...) asparagine glycan. A heme-binding site is contributed by C461.

It belongs to the cytochrome P450 family. Heme serves as cofactor.

Its subcellular location is the membrane. Its pathway is secondary metabolite biosynthesis. Functionally, cytochrome P450 monooxygenase; part of the gene cluster that mediates the biosynthesis of aspergillic acid, a hydroxamic acid-containing pyrazinone with aliphatic side chains that originates from leucine (Leu) and isoleucine (Ile). Aspergillic acid has antibiotic properties and was shown to be lethal to mice. The first step in the pathway is the production of deoxyaspergillic acid via a condensation between the Ile amine and the Leu carboxylic acid, followed by a reductive release from the protein forming the dipeptide aldehyde NH(2)-Leu-Ile-CHO, which could undergo an intermolecular cyclization resulting in a dihydropyrazinone. As the NRPS asaC lacks a condensation domain, it is improbable that it is responsible for condensation of Leu and Ile. One possibility is that asaC acts on a previously condensed dipeptide and functions as a Leu-Ile reductase to yield deoxyaspergillic acid. After asaC forms deoxyaspergillic acid, the cytochrome P450 asaD oxidizes the pyrazinone to the hydroxamic acid-containing bioactive metabolite aspergillic acid. The hydroxylase/desaturase asaB can then convert aspergillic acid to hydroxyaspergillic acid. Both aspergillic acid and hydroxyaspergillic acid can form complexes with iron producing ferriaspergillin analogs. This is Cytochrome P450 monooxygenase asaD from Aspergillus flavus (strain ATCC 200026 / FGSC A1120 / IAM 13836 / NRRL 3357 / JCM 12722 / SRRC 167).